Consider the following 150-residue polypeptide: 6,7-dimethyl-8-ribityllumazine synthase (150 aa).

5-amino-6-(D-ribitylamino)uracil-binding positions include Phe11, 43-45, and 67-69; these read TYE and AVI. Position 72–73 (72–73) interacts with (2S)-2-hydroxy-3-oxobutyl phosphate; it reads AT. His75 functions as the Proton donor in the catalytic mechanism. Leu100 lines the 5-amino-6-(D-ribitylamino)uracil pocket. Arg115 provides a ligand contact to (2S)-2-hydroxy-3-oxobutyl phosphate.

The protein belongs to the DMRL synthase family.

It carries out the reaction (2S)-2-hydroxy-3-oxobutyl phosphate + 5-amino-6-(D-ribitylamino)uracil = 6,7-dimethyl-8-(1-D-ribityl)lumazine + phosphate + 2 H2O + H(+). The protein operates within cofactor biosynthesis; riboflavin biosynthesis; riboflavin from 2-hydroxy-3-oxobutyl phosphate and 5-amino-6-(D-ribitylamino)uracil: step 1/2. In terms of biological role, catalyzes the formation of 6,7-dimethyl-8-ribityllumazine by condensation of 5-amino-6-(D-ribitylamino)uracil with 3,4-dihydroxy-2-butanone 4-phosphate. This is the penultimate step in the biosynthesis of riboflavin. The chain is 6,7-dimethyl-8-ribityllumazine synthase from Staphylothermus marinus (strain ATCC 43588 / DSM 3639 / JCM 9404 / F1).